Consider the following 237-residue polypeptide: Demethylmenaquinone methyltransferase (237 aa).

S-adenosyl-L-methionine-binding positions include T58, D79, and 106 to 107 (NA).

This sequence belongs to the class I-like SAM-binding methyltransferase superfamily. MenG/UbiE family.

The enzyme catalyses a 2-demethylmenaquinol + S-adenosyl-L-methionine = a menaquinol + S-adenosyl-L-homocysteine + H(+). It participates in quinol/quinone metabolism; menaquinone biosynthesis; menaquinol from 1,4-dihydroxy-2-naphthoate: step 2/2. Methyltransferase required for the conversion of demethylmenaquinol (DMKH2) to menaquinol (MKH2). This chain is Demethylmenaquinone methyltransferase, found in Bacillus cereus (strain B4264).